The sequence spans 156 residues: Small ribosomal subunit protein uS7c (156 aa).

It belongs to the universal ribosomal protein uS7 family. In terms of assembly, part of the 30S ribosomal subunit.

It is found in the plastid. The protein resides in the chloroplast. One of the primary rRNA binding proteins, it binds directly to 16S rRNA where it nucleates assembly of the head domain of the 30S subunit. This is Small ribosomal subunit protein uS7c (rps7) from Ostreococcus tauri.